A 45-amino-acid polypeptide reads, in one-letter code: uncharacterized protein (45 aa).

A C2H2-type zinc finger spans residues 2–25; sequence YQCLRCGGIFNKRREVVEHLLVGH.

This is an uncharacterized protein from Sulfolobus spindle-shape virus 1 (SSV1).